The chain runs to 200 residues: Small ribosomal subunit protein uS4 (200 aa).

The tract at residues 20-41 (SGTGKELEKRPYAPGQHGPNQR) is disordered. In terms of domain architecture, S4 RNA-binding spans 92-155 (ARLDAVVYSL…LKLDIIAESV (64 aa)).

This sequence belongs to the universal ribosomal protein uS4 family. Part of the 30S ribosomal subunit. Contacts protein S5. The interaction surface between S4 and S5 is involved in control of translational fidelity.

Its function is as follows. One of the primary rRNA binding proteins, it binds directly to 16S rRNA where it nucleates assembly of the body of the 30S subunit. Functionally, with S5 and S12 plays an important role in translational accuracy. The polypeptide is Small ribosomal subunit protein uS4 (Staphylococcus saprophyticus subsp. saprophyticus (strain ATCC 15305 / DSM 20229 / NCIMB 8711 / NCTC 7292 / S-41)).